We begin with the raw amino-acid sequence, 290 residues long: Arylamine N-acetyltransferase 1 (290 aa).

The residue at position 1 (Met-1) is an N-acetylmethionine. Ser-103 contributes to the CoA binding site. A substrate-binding site is contributed by 106–107 (IH). Position 208 (Tyr-208) interacts with CoA.

This sequence belongs to the arylamine N-acetyltransferase family.

The protein localises to the cytoplasm. It catalyses the reaction an arylamine + acetyl-CoA = an N-acetylarylamine + CoA. In terms of biological role, participates in the detoxification of a plethora of hydrazine and arylamine drugs. This chain is Arylamine N-acetyltransferase 1 (NAT1), found in Bos taurus (Bovine).